We begin with the raw amino-acid sequence, 365 residues long: Eukaryotic translation initiation factor 3 subunit H (365 aa).

Residues 11 to 160 form the MPN domain; the sequence is VKVEALVVMK…LRAFRLSPKF (150 aa).

Belongs to the eIF-3 subunit H family. In terms of assembly, component of the eukaryotic translation initiation factor 3 (eIF-3) complex.

Its subcellular location is the cytoplasm. In terms of biological role, component of the eukaryotic translation initiation factor 3 (eIF-3) complex, which is involved in protein synthesis of a specialized repertoire of mRNAs and, together with other initiation factors, stimulates binding of mRNA and methionyl-tRNAi to the 40S ribosome. The eIF-3 complex specifically targets and initiates translation of a subset of mRNAs involved in cell proliferation. The protein is Eukaryotic translation initiation factor 3 subunit H of Aspergillus niger (strain ATCC MYA-4892 / CBS 513.88 / FGSC A1513).